The chain runs to 393 residues: Ninja-family protein 1 (393 aa).

Disordered regions lie at residues M1–L27 and N155–N200. Basic and acidic residues predominate over residues D156–L170.

This sequence belongs to the Ninja family.

Its subcellular location is the nucleus. The protein is Ninja-family protein 1 of Zea mays (Maize).